A 469-amino-acid polypeptide reads, in one-letter code: Probable ribonuclease FAU-1 (469 aa).

Belongs to the FAU-1 family.

Functionally, probable RNase involved in rRNA stability through maturation and/or degradation of precursor rRNAs. Binds to RNA in loop regions with AU-rich sequences. The sequence is that of Probable ribonuclease FAU-1 from Ignicoccus hospitalis (strain KIN4/I / DSM 18386 / JCM 14125).